We begin with the raw amino-acid sequence, 153 residues long: Ribosomal RNA large subunit methyltransferase H (153 aa).

S-adenosyl-L-methionine contacts are provided by leucine 71 and glycine 102.

The protein belongs to the RNA methyltransferase RlmH family. As to quaternary structure, homodimer.

It localises to the cytoplasm. It carries out the reaction pseudouridine(1915) in 23S rRNA + S-adenosyl-L-methionine = N(3)-methylpseudouridine(1915) in 23S rRNA + S-adenosyl-L-homocysteine + H(+). Functionally, specifically methylates the pseudouridine at position 1915 (m3Psi1915) in 23S rRNA. The protein is Ribosomal RNA large subunit methyltransferase H of Anaeromyxobacter dehalogenans (strain 2CP-C).